We begin with the raw amino-acid sequence, 430 residues long: GTPase Obg (430 aa).

The Obg domain maps to 1–158; the sequence is MFVDQVTISL…LDVTLELKLL (158 aa). Positions 118-145 are disordered; sequence RGGRGGRGNSRFATPRNPAPDFSENGEP. Residues 159-329 form the OBG-type G domain; it reads ADVGLVGFPS…LLYAIADKLD (171 aa). Residues 165 to 172, 190 to 194, 212 to 215, 282 to 285, and 310 to 312 each bind GTP; these read GFPSVGKS, FTTIK, DLPG, NKMD, and STI. The Mg(2+) site is built by S172 and T192. The region spanning 352-430 is the OCT domain; sequence KHTPSQDKFT…ILGGEFEFVE (79 aa).

The protein belongs to the TRAFAC class OBG-HflX-like GTPase superfamily. OBG GTPase family. Monomer. Mg(2+) is required as a cofactor.

Its subcellular location is the cytoplasm. An essential GTPase which binds GTP, GDP and possibly (p)ppGpp with moderate affinity, with high nucleotide exchange rates and a fairly low GTP hydrolysis rate. Plays a role in control of the cell cycle, stress response, ribosome biogenesis and in those bacteria that undergo differentiation, in morphogenesis control. This Staphylococcus haemolyticus (strain JCSC1435) protein is GTPase Obg.